Here is a 208-residue protein sequence, read N- to C-terminus: Small ribosomal subunit protein eS8 (208 aa).

Positions 1 to 34 (MGISRDHWHKRRATGGKRAPIRKKRKYELGRPAA) are disordered. Positions 7–26 (HWHKRRATGGKRAPIRKKRK) are enriched in basic residues.

The protein belongs to the eukaryotic ribosomal protein eS8 family. In terms of assembly, component of the small ribosomal subunit. Identified in a IGF2BP1-dependent mRNP granule complex containing untranslated mRNAs. Part of the small subunit (SSU) processome, composed of more than 70 proteins and the RNA chaperone small nucleolar RNA (snoRNA) U3.

It localises to the cytoplasm. Its subcellular location is the membrane. The protein resides in the nucleus. The protein localises to the nucleolus. Its function is as follows. Component of the small ribosomal subunit. The ribosome is a large ribonucleoprotein complex responsible for the synthesis of proteins in the cell. Part of the small subunit (SSU) processome, first precursor of the small eukaryotic ribosomal subunit. During the assembly of the SSU processome in the nucleolus, many ribosome biogenesis factors, an RNA chaperone and ribosomal proteins associate with the nascent pre-rRNA and work in concert to generate RNA folding, modifications, rearrangements and cleavage as well as targeted degradation of pre-ribosomal RNA by the RNA exosome. The protein is Small ribosomal subunit protein eS8 (RpS8) of Spodoptera frugiperda (Fall armyworm).